The following is a 335-amino-acid chain: Phosphatidylcholine:ceramide cholinephosphotransferase 2 (335 aa).

The next 5 helical transmembrane spans lie at 60–80 (LTAF…LTVI), 104–124 (WSVG…IIFL), 136–156 (FLLG…TFLP), 200–220 (ILCG…MYFV), and 229–249 (LVIL…ALVV). Residue His210 is part of the active site. Residues His253 and Asp257 contribute to the active site. A helical transmembrane segment spans residues 258 to 278 (VLIAYWLTSHVFWSYHQIFEM). At 279 to 335 (RKDDRPQAPLSRLWWFWLCYWFESDVADGKLVNKWNWPLEGPQRMHTIMNRINYKLQ) the chain is on the cytoplasmic side.

It belongs to the sphingomyelin synthase family.

It localises to the membrane. The enzyme catalyses an N-acylsphing-4-enine + a 1,2-diacyl-sn-glycero-3-phosphocholine = a sphingomyelin + a 1,2-diacyl-sn-glycerol. It carries out the reaction an N-acyl-15-methylhexadecasphing-4-enine + a 1,2-diacyl-sn-glycero-3-phosphocholine = an N-acyl-15-methylhexadecasphing-4-enine-1-phosphocholine + a 1,2-diacyl-sn-glycerol. It functions in the pathway lipid metabolism; sphingolipid metabolism. Sphingomyelin synthases (SM synthase or SMS) synthesize the sphingolipid sphingomyelin (SM) through transfer of the phosphatidyl head group of 1,2-diacyl-sn-glycero-3-phosphocholine (phosphatidylcholine, PC) on to the primary hydroxyl of ceramide (N-acylsphingoid base), yielding 1,2-diacyl-sn-glycerol (diacylglycerol, DAG) as a side product. Functions as a bidirectional lipid cholinephosphotransferases capable of converting PC and ceramide to SM and DAG and vice versa depending on the respective levels of ceramide and DAG as phosphocholine acceptors, respectively. The polypeptide is Phosphatidylcholine:ceramide cholinephosphotransferase 2 (sms-2) (Caenorhabditis elegans).